The primary structure comprises 517 residues: 2-isopropylmalate synthase (517 aa).

A Pyruvate carboxyltransferase domain is found at 5-267; sequence VIIFDTTLRD…HTNVRCQEIY (263 aa). The Mn(2+) site is built by Asp-14, His-202, His-204, and Asn-238. The interval 392 to 517 is regulatory domain; it reads RLKCFHVDSS…QRKYIKKNNN (126 aa).

It belongs to the alpha-IPM synthase/homocitrate synthase family. LeuA type 1 subfamily. As to quaternary structure, homodimer. Requires Mn(2+) as cofactor.

The protein localises to the cytoplasm. It catalyses the reaction 3-methyl-2-oxobutanoate + acetyl-CoA + H2O = (2S)-2-isopropylmalate + CoA + H(+). It participates in amino-acid biosynthesis; L-leucine biosynthesis; L-leucine from 3-methyl-2-oxobutanoate: step 1/4. Its function is as follows. Catalyzes the condensation of the acetyl group of acetyl-CoA with 3-methyl-2-oxobutanoate (2-ketoisovalerate) to form 3-carboxy-3-hydroxy-4-methylpentanoate (2-isopropylmalate). In Blochmanniella pennsylvanica (strain BPEN), this protein is 2-isopropylmalate synthase.